A 1703-amino-acid chain; its full sequence is MAQIASGVNEIKSNLGDIRKLINQNAQYDQKKEYQVQVTIIEARGLIAKDADGSDPYVKIFVGKLPPQVTNTKSNASTVVFNQSFTFKDLFLNQIELENQEITLQVIDQNQFATNPLIGQQSIGLSTLYRSNNHEFFKTWLTLIHPDQGIEPQGYLLVSCYIIGTEDRPPVHDINEAKEDDDDGCSFLNIPDEELNDEQRKKKAIWKQPVVPINMPLNKREQYQLLVSIVKGEDLPILTGSTCDSFIACRVGSNVLRTMTVKNSQKPNFQTKMVFPVFFPVYNDKIVIRVWDSRTLRSDNFIAAIPEKPNENDWFNINTLHSRGGTMSFRWFHLYGVPLPERPEGMIDEVVKKLTKQVEGTMYMGRILLSLSLSPNEKAELGLQSLGGYKEPPILKYIIRCDTFELQSSFDCGQYIMIEINFGGQVIRSNLCQKRVDSHEKQKNNQQSSRTRELNQYIWKDSKSQIKDELQIDIPFDQSQQPDVIVSLYSVTPNKKTLDYDVGDMKRQAYIRIKPTSRELEHEQPKWYQLKPVKYKTIQEVHSHLLMNVELKTEMVAKQKTRHPIKRSLKQMYQFKGYLWGGYDLLPSHHSDDTCIKAQLQIGTRIIDVVTGRKGKNVIWNHSLEFLIELDEKLEFSSNILVSFYNKKSSDEEFIGQIAIKAVACEVKIDNKQINIPPPKPKYQFYHIVQEGKSNGRILAAFQLQRSEKTFNQNNDVNEPKYDKILKDQDFKYVQVKFPLIGVRNLPEGIRDPEFVFRIPQPDLKFVITLEERKQRKELTRNYYYEKIITLKNNEEEQEQAEQKKTIGGKIFTMIAEQQKVALKNINFCTILENDISECLKIPVDLQFTPILELEIRDRAAAIKTVRYHSSISLIDYIPWGDVGTKNAKIEFFEIGKLNLMLLQDEDQDAVQNQFNDDDEGDNEDEQDSRENDFDDNRDANLIFTEQFREEVDQQNQNSDDKRRLLSNKNLDKLDGDDQPQSLKNLQNLDSLSKADQKSQFDLKSESKSRATGKTKTSKKSTSSTARKLLLQQKLFESTQTFFNAEFNPSVEFTKSLIDEANFKLEREQKIQKLADLVFELKKMKKKDEGREKQLLREIEDLKNYLVKENIFLEQGDDGAQENFDYGREIVRVPLQDQLEKGLPYKKFRLYMYGNNTHDIGIPTAAVIKAHLKVLEHDIEIIKQRKTQIRETLKNKSNRSSMSLSMRSSIQSNTFKSSRKTSRSQKLGENKPLVSYECEGDDQRFPFDIFKKTFLEFFQKQFELKTRVYLLRCTNISAQASKIEAYHLLAGEAAVCSASSYPWVIVGDGENRGKNIIKNIKDDANIAVDTLNPEFFKMYELDATLPEDWNLVVKIMNKGTAIDALIGQFEIDLEDRVLGQKELRRRIAYQTYIEYFREKCEQYKYNYEIGDKKKNYEIKINELITKIEALDRNLKLPVEYLELKHPEKNTCQGTIEFFLEPFPFDVARIIPPSTIEKPQPMEFEIRLIIWETFDIPISNPIQKSTVDIFLTVSLDSTANIKGEEIVKETDVHFGSENGNGVFNYRMVFPLVIPCSFPRLRLQVSDFSTVGSNESLGETVITLRKALKKLKEGIVFQMPTTKFKFEHPNYPGQDRGCVSISMKIINKQAAESDPVGEGQNEPNKDPILEKPKEGRNVGDFLKGTALDFSAWSFFGLTALKYFAGIFVSIVTMMILFVKPGILVN.

C2 domains follow at residues 18–141 (IRKL…KTWL) and 207–332 (KQPV…FRWF). 3 disordered regions span residues 913–937 (NQFN…FDDN), 970–1025 (NLDK…TSST), and 1194–1228 (KNKS…QKLG). Over residues 916 to 928 (NDDDEGDNEDEQD) the composition is skewed to acidic residues. The span at 979-991 (QPQSLKNLQNLDS) shows a compositional bias: polar residues. The span at 993-1009 (SKADQKSQFDLKSESKS) shows a compositional bias: basic and acidic residues. A compositionally biased stretch (low complexity) spans 1198 to 1209 (NRSSMSLSMRSS). The 130-residue stretch at 1466–1595 (VARIIPPSTI…LKKLKEGIVF (130 aa)) folds into the C2 3 domain. Residues 1628–1651 (AAESDPVGEGQNEPNKDPILEKPK) are disordered. Residues 1641–1651 (PNKDPILEKPK) show a composition bias toward basic and acidic residues. The helical transmembrane segment at 1681–1701 (FAGIFVSIVTMMILFVKPGIL) threads the bilayer.

It belongs to the ferlin family.

It is found in the membrane. Regulates mucocyst exocytosis. The chain is Ferlin 2 from Tetrahymena thermophila (strain SB210).